We begin with the raw amino-acid sequence, 711 residues long: DNA topoisomerase 3 (711 aa).

The Toprim domain maps to K2–T135. Residues E8 and D104 each contribute to the Mg(2+) site. The Topo IA-type catalytic domain occupies Y152–V580. An interaction with DNA region spans residues S186–Q191. The O-(5'-phospho-DNA)-tyrosine intermediate role is filled by Y305. The segment at M691–L711 is disordered.

It belongs to the type IA topoisomerase family. Requires Mg(2+) as cofactor.

The catalysed reaction is ATP-independent breakage of single-stranded DNA, followed by passage and rejoining.. Releases the supercoiling and torsional tension of DNA, which is introduced during the DNA replication and transcription, by transiently cleaving and rejoining one strand of the DNA duplex. Introduces a single-strand break via transesterification at a target site in duplex DNA. The scissile phosphodiester is attacked by the catalytic tyrosine of the enzyme, resulting in the formation of a DNA-(5'-phosphotyrosyl)-enzyme intermediate and the expulsion of a 3'-OH DNA strand. The free DNA strand then undergoes passage around the unbroken strand, thus removing DNA supercoils. Finally, in the religation step, the DNA 3'-OH attacks the covalent intermediate to expel the active-site tyrosine and restore the DNA phosphodiester backbone. This chain is DNA topoisomerase 3, found in Staphylococcus aureus (strain Mu50 / ATCC 700699).